A 1378-amino-acid chain; its full sequence is Attractin-like protein 1 (1378 aa).

An N-terminal signal peptide occupies residues methionine 1–alanine 51. Residues leucine 52–glutamine 90 enclose the EGF-like 1 domain. Over leucine 52–leucine 1229 the chain is Extracellular. Cystine bridges form between cysteine 62/cysteine 78, cysteine 80/cysteine 89, and cysteine 92/cysteine 118. Asparagine 75 carries an N-linked (GlcNAc...) asparagine glycan. A CUB domain is found at cysteine 92–asparagine 208. 2 N-linked (GlcNAc...) asparagine glycosylation sites follow: asparagine 173 and asparagine 197. Residues serine 206–aspartate 244 enclose the EGF-like 2 domain. 3 disulfides stabilise this stretch: cysteine 210–cysteine 220, cysteine 214–cysteine 232, and cysteine 234–cysteine 243. 6 Kelch repeats span residues phenylalanine 315 to glutamate 364, isoleucine 366 to serine 414, valine 426 to aspartate 474, serine 479 to glycine 530, methionine 532 to glycine 590, and serine 591 to asparagine 637. The N-linked (GlcNAc...) asparagine glycan is linked to asparagine 379. 3 PSI domains span residues asparagine 613–proline 656, arginine 665–histidine 708, and isoleucine 714–leucine 759. A glycan (N-linked (GlcNAc...) asparagine) is linked at asparagine 703. Residues valine 754–glutamate 872 form the C-type lectin domain. Cysteines 775 and 871 form a disulfide. N-linked (GlcNAc...) asparagine glycosylation is found at asparagine 777 and asparagine 897. PSI domains follow at residues proline 888–serine 938 and asparagine 941–proline 1011. 8 cysteine pairs are disulfide-bonded: cysteine 1013–cysteine 1021, cysteine 1015–cysteine 1027, cysteine 1030–cysteine 1039, cysteine 1042–cysteine 1056, cysteine 1059–cysteine 1068, cysteine 1061–cysteine 1075, cysteine 1077–cysteine 1087, and cysteine 1090–cysteine 1105. 2 Laminin EGF-like domains span residues cysteine 1013–alanine 1058 and cysteine 1059–tyrosine 1107. Asparagine 1156 carries an N-linked (GlcNAc...) asparagine glycan. Residues valine 1230–valine 1250 traverse the membrane as a helical segment. The Cytoplasmic segment spans residues tryptophan 1251–valine 1378. Residues valine 1287–cysteine 1324 form an interaction with MC4R region. The segment at glutamine 1351–valine 1378 is disordered.

As to quaternary structure, interacts with MC4R. Highly expressed in brain, heart, lung, kidney and liver. In the central nervous system, it is highly expressed in the dentate gyrus, CA1-3 regions of the hippocampus, and the ventral taenia tecta.

Its subcellular location is the cell membrane. In terms of biological role, may play a role in melanocortin signaling pathways that regulate energy homeostasis. The chain is Attractin-like protein 1 (Atrnl1) from Mus musculus (Mouse).